Reading from the N-terminus, the 134-residue chain is Proline-rich nuclear receptor coactivator 2 (134 aa).

The segment at 1–74 (MGGGERYNIP…NNSNWNASLS (74 aa)) is disordered. Polar residues-rich tracts occupy residues 11–24 (DPQSRNASKNQQQH) and 52–61 (SAVQNGGKTK). The segment covering 62-74 (SLSNNSNWNASLS) has biased composition (low complexity). Residues 94-100 (SEPPSPS) carry the SH3-binding motif.

It belongs to the PNRC family. PNRC2 subfamily. As to quaternary structure, interacts with UPF1/RENT1; preferentially interacts with hyperphosphorylated form. Interacts with DCP1A. Interacts with many nuclear receptors including ESR1, ESRRA, ESRRG, NR3C1/GR, NR5A1, PGR, TR, RAR and RXR.

It localises to the nucleus. It is found in the cytoplasm. The protein resides in the P-body. In terms of biological role, involved in nonsense-mediated mRNA decay (NMD) by acting as a bridge between the mRNA decapping complex and the NMD machinery. May act by targeting the NMD machinery to the P-body and recruiting the decapping machinery to aberrant mRNAs. Required for UPF1/RENT1 localization to the P-body. Plays a role in glucocorticoid receptor-mediated mRNA degradation by interacting with the glucocorticoid receptor NR3C1 in a ligand-dependent manner when it is bound to the 5' UTR of target mRNAs and recruiting the RNA helicase UPF1 and the mRNA-decapping enzyme DCP1A, leading to RNA decay. Also acts as a nuclear receptor coactivator. May play a role in controlling the energy balance between energy storage and energy expenditure. The polypeptide is Proline-rich nuclear receptor coactivator 2 (Pnrc2) (Rattus norvegicus (Rat)).